A 301-amino-acid polypeptide reads, in one-letter code: Epimerase family protein Mb2239 (301 aa).

Belongs to the NAD(P)-dependent epimerase/dehydratase family. SDR39U1 subfamily.

The protein is Epimerase family protein Mb2239 of Mycobacterium bovis (strain ATCC BAA-935 / AF2122/97).